The sequence spans 85 residues: NADH-ubiquinone oxidoreductase chain 4L (85 aa).

2 helical membrane passes run 21-41 and 51-71; these read LLVTLLSLEFLILLLFSLLVY and FIFLSVTVCEGALGFSVLVSL.

The protein belongs to the complex I subunit 4L family.

The protein resides in the mitochondrion membrane. The catalysed reaction is a ubiquinone + NADH + 5 H(+)(in) = a ubiquinol + NAD(+) + 4 H(+)(out). Functionally, core subunit of the mitochondrial membrane respiratory chain NADH dehydrogenase (Complex I) that is believed to belong to the minimal assembly required for catalysis. Complex I functions in the transfer of electrons from NADH to the respiratory chain. The immediate electron acceptor for the enzyme is believed to be ubiquinone. This is NADH-ubiquinone oxidoreductase chain 4L (ND4L) from Artemia franciscana (Brine shrimp).